Reading from the N-terminus, the 347-residue chain is NADH-ubiquinone oxidoreductase chain 2 (347 aa).

A run of 11 helical transmembrane segments spans residues 3–23 (PPIL…VLTS), 25–45 (HWLT…PILM), 59–79 (YLLT…IDLL), 96–116 (AMMT…FWVP), 122–142 (IHMS…LSIL), 149–169 (INPN…GWGG), 178–198 (ILAY…LYNP), 200–220 (MMIL…MLFM), 237–257 (APLI…LPPL), 274–294 (EMII…YFYM), and 325–345 (LLSP…LLSI).

It belongs to the complex I subunit 2 family. As to quaternary structure, core subunit of respiratory chain NADH dehydrogenase (Complex I) which is composed of 45 different subunits. Interacts with TMEM242.

It localises to the mitochondrion inner membrane. It carries out the reaction a ubiquinone + NADH + 5 H(+)(in) = a ubiquinol + NAD(+) + 4 H(+)(out). Core subunit of the mitochondrial membrane respiratory chain NADH dehydrogenase (Complex I) which catalyzes electron transfer from NADH through the respiratory chain, using ubiquinone as an electron acceptor. Essential for the catalytic activity and assembly of complex I. This Cynictis penicillata (Yellow mongoose) protein is NADH-ubiquinone oxidoreductase chain 2.